The sequence spans 610 residues: Glutamine--fructose-6-phosphate aminotransferase [isomerizing] (610 aa).

Catalysis depends on Cys-2, which acts as the Nucleophile; for GATase activity. The region spanning Cys-2–Arg-218 is the Glutamine amidotransferase type-2 domain. SIS domains are found at residues Ala-286 to Arg-426 and Leu-459 to Pro-600. Catalysis depends on Lys-605, which acts as the For Fru-6P isomerization activity.

As to quaternary structure, homodimer.

Its subcellular location is the cytoplasm. It carries out the reaction D-fructose 6-phosphate + L-glutamine = D-glucosamine 6-phosphate + L-glutamate. Catalyzes the first step in hexosamine metabolism, converting fructose-6P into glucosamine-6P using glutamine as a nitrogen source. In Vibrio vulnificus (strain YJ016), this protein is Glutamine--fructose-6-phosphate aminotransferase [isomerizing].